The following is a 209-amino-acid chain: MTRYVISRLSAIALLALAPALALADGAQDQLKAFVAKVQSATGDFTQSTVGPQGRTQPAQSGSFAFQRPGKFKWAVARPYEQLVISDGKQVYQYDPDLAQVTERKVDQAIGTSPAAILFGSGDLDKAFHVSPLPDRDGLQWLRAKPRNADAGFSQVDIAMNGDLPARVELLDAFGQTTRVDLSNIQANPKLPAAEFHFTAPSGVDVVKM.

The N-terminal stretch at 1-24 (MTRYVISRLSAIALLALAPALALA) is a signal peptide.

This sequence belongs to the LolA family. In terms of assembly, monomer.

It localises to the periplasm. Its function is as follows. Participates in the translocation of lipoproteins from the inner membrane to the outer membrane. Only forms a complex with a lipoprotein if the residue after the N-terminal Cys is not an aspartate (The Asp acts as a targeting signal to indicate that the lipoprotein should stay in the inner membrane). The protein is Outer-membrane lipoprotein carrier protein of Bordetella avium (strain 197N).